The primary structure comprises 415 residues: Glutamyl-tRNA reductase (415 aa).

Substrate contacts are provided by residues 49-52 (TCNR), Ser104, 109-111 (EPQ), and Gln115. Cys50 serves as the catalytic Nucleophile. NADP(+) is bound at residue 184 to 189 (GAGEMI).

Belongs to the glutamyl-tRNA reductase family. In terms of assembly, homodimer.

It catalyses the reaction (S)-4-amino-5-oxopentanoate + tRNA(Glu) + NADP(+) = L-glutamyl-tRNA(Glu) + NADPH + H(+). Its pathway is porphyrin-containing compound metabolism; protoporphyrin-IX biosynthesis; 5-aminolevulinate from L-glutamyl-tRNA(Glu): step 1/2. Functionally, catalyzes the NADPH-dependent reduction of glutamyl-tRNA(Glu) to glutamate 1-semialdehyde (GSA). The protein is Glutamyl-tRNA reductase of Neisseria meningitidis serogroup C (strain 053442).